The following is a 203-amino-acid chain: Imidazoleglycerol-phosphate dehydratase (203 aa).

This sequence belongs to the imidazoleglycerol-phosphate dehydratase family.

The protein resides in the cytoplasm. It catalyses the reaction D-erythro-1-(imidazol-4-yl)glycerol 3-phosphate = 3-(imidazol-4-yl)-2-oxopropyl phosphate + H2O. Its pathway is amino-acid biosynthesis; L-histidine biosynthesis; L-histidine from 5-phospho-alpha-D-ribose 1-diphosphate: step 6/9. The polypeptide is Imidazoleglycerol-phosphate dehydratase (Salinispora arenicola (strain CNS-205)).